The chain runs to 89 residues: Small ribosomal subunit protein uS15 (89 aa).

The protein belongs to the universal ribosomal protein uS15 family. As to quaternary structure, part of the 30S ribosomal subunit. Forms a bridge to the 50S subunit in the 70S ribosome, contacting the 23S rRNA.

Its function is as follows. One of the primary rRNA binding proteins, it binds directly to 16S rRNA where it helps nucleate assembly of the platform of the 30S subunit by binding and bridging several RNA helices of the 16S rRNA. Forms an intersubunit bridge (bridge B4) with the 23S rRNA of the 50S subunit in the ribosome. The protein is Small ribosomal subunit protein uS15 of Corynebacterium urealyticum (strain ATCC 43042 / DSM 7109).